Here is a 670-residue protein sequence, read N- to C-terminus: Rhophilin-1 (670 aa).

Residues Met-1 to Gln-20 are disordered. The 75-residue stretch at Asp-23–Pro-97 folds into the REM-1 domain. Ser-24 carries the post-translational modification Phosphoserine. The region spanning Pro-108 to Glu-457 is the BRO1 domain. Positions Pro-513 to Pro-592 constitute a PDZ domain. The interval Gln-616–Pro-670 is disordered. A compositionally biased stretch (pro residues) spans Pro-652–Pro-661.

This sequence belongs to the RHPN family. In terms of assembly, binds specifically to GTP-Rho. Interacts with ROPN1.

In terms of biological role, has no enzymatic activity. May serve as a target for Rho, and interact with some cytoskeletal component upon Rho binding or relay a Rho signal to other molecules. This Homo sapiens (Human) protein is Rhophilin-1.